The primary structure comprises 476 residues: Ribulose bisphosphate carboxylase large chain (476 aa).

Positions 1-2 (MS) are excised as a propeptide. Pro-3 carries the post-translational modification N-acetylproline. The residue at position 14 (Lys-14) is an N6,N6,N6-trimethyllysine. 2 residues coordinate substrate: Asn-123 and Thr-173. Catalysis depends on Lys-175, which acts as the Proton acceptor. Substrate is bound at residue Lys-177. Mg(2+) contacts are provided by Lys-201, Asp-203, and Glu-204. Lys-201 carries the post-translational modification N6-carboxylysine. Catalysis depends on His-294, which acts as the Proton acceptor. Substrate contacts are provided by Arg-295, His-327, and Ser-379.

Belongs to the RuBisCO large chain family. Type I subfamily. Heterohexadecamer of 8 large chains and 8 small chains; disulfide-linked. The disulfide link is formed within the large subunit homodimers. The cofactor is Mg(2+). Post-translationally, the disulfide bond which can form in the large chain dimeric partners within the hexadecamer appears to be associated with oxidative stress and protein turnover.

Its subcellular location is the plastid. The protein localises to the chloroplast. The enzyme catalyses 2 (2R)-3-phosphoglycerate + 2 H(+) = D-ribulose 1,5-bisphosphate + CO2 + H2O. The catalysed reaction is D-ribulose 1,5-bisphosphate + O2 = 2-phosphoglycolate + (2R)-3-phosphoglycerate + 2 H(+). Functionally, ruBisCO catalyzes two reactions: the carboxylation of D-ribulose 1,5-bisphosphate, the primary event in carbon dioxide fixation, as well as the oxidative fragmentation of the pentose substrate in the photorespiration process. Both reactions occur simultaneously and in competition at the same active site. In Zea mays (Maize), this protein is Ribulose bisphosphate carboxylase large chain.